We begin with the raw amino-acid sequence, 147 residues long: Large-conductance mechanosensitive channel (147 aa).

Helical transmembrane passes span 14-34 and 85-105; these read VVDM…VKSL and FGLF…LFMI.

The protein belongs to the MscL family. In terms of assembly, homopentamer.

It localises to the cell inner membrane. Channel that opens in response to stretch forces in the membrane lipid bilayer. May participate in the regulation of osmotic pressure changes within the cell. This chain is Large-conductance mechanosensitive channel, found in Tolumonas auensis (strain DSM 9187 / NBRC 110442 / TA 4).